The chain runs to 223 residues: Orotate phosphoribosyltransferase (223 aa).

5-phospho-alpha-D-ribose 1-diphosphate-binding positions include arginine 107, lysine 108, lysine 111, histidine 113, and glutamate 133–serine 141. Threonine 137 serves as a coordination point for orotate. The segment covering serine 192–serine 211 has biased composition (low complexity). Residues serine 192–methionine 212 are disordered.

Belongs to the purine/pyrimidine phosphoribosyltransferase family. PyrE subfamily. As to quaternary structure, homodimer. Mg(2+) serves as cofactor.

It catalyses the reaction orotidine 5'-phosphate + diphosphate = orotate + 5-phospho-alpha-D-ribose 1-diphosphate. The protein operates within pyrimidine metabolism; UMP biosynthesis via de novo pathway; UMP from orotate: step 1/2. Catalyzes the transfer of a ribosyl phosphate group from 5-phosphoribose 1-diphosphate to orotate, leading to the formation of orotidine monophosphate (OMP). The chain is Orotate phosphoribosyltransferase (pyrE) from Rhizobium leguminosarum bv. trifolii.